Reading from the N-terminus, the 178-residue chain is Neuroblastoma suppressor of tumorigenicity 1 (178 aa).

The signal sequence occupies residues M1–A16. 5 disulfide bridges follow: C34–C84, C48–C98, C58–C117, C62–C119, and C81–C122. Residues C34–G123 enclose the CTCK domain. The interval N132 to D178 is disordered. The segment covering S140–P160 has biased composition (low complexity).

Belongs to the DAN family. In terms of assembly, homodimer.

It localises to the secreted. In terms of biological role, possible candidate as a tumor suppressor gene of neuroblastoma. May play an important role in preventing cells from entering the final stage (G1/S) of the transformation process. The sequence is that of Neuroblastoma suppressor of tumorigenicity 1 (Nbl1) from Mus musculus (Mouse).